The sequence spans 470 residues: Poly(A) polymerase catalytic subunit (470 aa).

Residues Asp192 and Asp194 contribute to the active site.

It belongs to the poxviridae poly(A) polymerase catalytic subunit family. In terms of assembly, heterodimer of a large (catalytic) subunit and a small (regulatory) subunit.

It catalyses the reaction RNA(n) + ATP = RNA(n)-3'-adenine ribonucleotide + diphosphate. Polymerase that creates the 3'-poly(A) tail of mRNA's. The polypeptide is Poly(A) polymerase catalytic subunit (PAPL) (Molluscum contagiosum virus subtype 1 (MOCV)).